A 402-amino-acid chain; its full sequence is Argininosuccinate synthase (402 aa).

ATP-binding positions include 10 to 18 (AYSGGLDTS) and Ala-38. Tyr-90 contacts L-citrulline. Residue Gly-120 coordinates ATP. Residues Thr-122, Asn-126, and Asp-127 each coordinate L-aspartate. Asn-126 serves as a coordination point for L-citrulline. Residues Arg-130, Ser-179, Ser-188, Glu-264, and Tyr-276 each coordinate L-citrulline.

It belongs to the argininosuccinate synthase family. Type 1 subfamily. In terms of assembly, homotetramer.

The protein localises to the cytoplasm. The catalysed reaction is L-citrulline + L-aspartate + ATP = 2-(N(omega)-L-arginino)succinate + AMP + diphosphate + H(+). It participates in amino-acid biosynthesis; L-arginine biosynthesis; L-arginine from L-ornithine and carbamoyl phosphate: step 2/3. This is Argininosuccinate synthase from Psychromonas ingrahamii (strain DSM 17664 / CCUG 51855 / 37).